Consider the following 126-residue polypeptide: Aspartate 1-decarboxylase (126 aa).

Serine 25 (schiff-base intermediate with substrate; via pyruvic acid) is an active-site residue. Serine 25 carries the pyruvic acid (Ser) modification. Threonine 57 lines the substrate pocket. The active-site Proton donor is tyrosine 58. 73 to 75 provides a ligand contact to substrate; it reads GAA.

It belongs to the PanD family. Heterooctamer of four alpha and four beta subunits. Pyruvate serves as cofactor. Post-translationally, is synthesized initially as an inactive proenzyme, which is activated by self-cleavage at a specific serine bond to produce a beta-subunit with a hydroxyl group at its C-terminus and an alpha-subunit with a pyruvoyl group at its N-terminus.

It is found in the cytoplasm. The enzyme catalyses L-aspartate + H(+) = beta-alanine + CO2. The protein operates within cofactor biosynthesis; (R)-pantothenate biosynthesis; beta-alanine from L-aspartate: step 1/1. Catalyzes the pyruvoyl-dependent decarboxylation of aspartate to produce beta-alanine. The protein is Aspartate 1-decarboxylase of Psychromonas ingrahamii (strain DSM 17664 / CCUG 51855 / 37).